The primary structure comprises 220 residues: Deoxyribose-phosphate aldolase (220 aa).

Aspartate 89 (proton donor/acceptor) is an active-site residue. The active-site Schiff-base intermediate with acetaldehyde is lysine 151. Residue lysine 180 is the Proton donor/acceptor of the active site.

The protein belongs to the DeoC/FbaB aldolase family. DeoC type 1 subfamily.

It is found in the cytoplasm. It carries out the reaction 2-deoxy-D-ribose 5-phosphate = D-glyceraldehyde 3-phosphate + acetaldehyde. Its pathway is carbohydrate degradation; 2-deoxy-D-ribose 1-phosphate degradation; D-glyceraldehyde 3-phosphate and acetaldehyde from 2-deoxy-alpha-D-ribose 1-phosphate: step 2/2. Catalyzes a reversible aldol reaction between acetaldehyde and D-glyceraldehyde 3-phosphate to generate 2-deoxy-D-ribose 5-phosphate. The sequence is that of Deoxyribose-phosphate aldolase from Macrococcus caseolyticus (strain JCSC5402) (Macrococcoides caseolyticum).